Here is a 300-residue protein sequence, read N- to C-terminus: Putative hydrolase ML2424 (300 aa).

The Nucleophile role is filled by Asp-56. 3 residues coordinate Mg(2+): Asp-56, Asp-58, and Asp-231. Asp-58 serves as the catalytic Proton donor.

It belongs to the HAD-like hydrolase superfamily. SerB family. The cofactor is Mg(2+).

This is Putative hydrolase ML2424 from Mycobacterium leprae (strain TN).